Consider the following 612-residue polypeptide: RNA-binding protein MRN1 (612 aa).

Positions 1 to 28 (MVVSYNNNNNNNNNNNNNNISNNNNNNN) are enriched in low complexity. 2 disordered regions span residues 1–57 (MVVS…TYAS) and 105–125 (PTQF…SQEQ). Polar residues-rich tracts occupy residues 42–57 (YQQS…TYAS) and 115–125 (DSQQQRFSQEQ). RRM domains lie at 201–274 (RTVY…WGKP), 292–379 (RNVY…KTQQ), 431–504 (RTVY…WGKH), and 522–602 (RNVY…FGKD).

The protein localises to the cytoplasm. Its function is as follows. RNA-binding protein that binds specific categories of mRNAs, including those that contain upstream open reading frames (uORFs) and internal ribosome entry sites (IRES). Probably involved in translational regulation. This Saccharomyces cerevisiae (strain ATCC 204508 / S288c) (Baker's yeast) protein is RNA-binding protein MRN1 (MRN1).